The following is a 78-amino-acid chain: Transmembrane protein 258 (78 aa).

Over 1–18 (MDVMQRYVSPVNPAVFPH) the chain is Cytoplasmic. A helical membrane pass occupies residues 19–39 (LATVLLVIGTFFTAWFFIFVV). Topologically, residues 40–53 (SRKSSKESTLIKEL) are cytoplasmic. A helical membrane pass occupies residues 54–74 (LISLCASIFLGFGIVFLLLTV). Topologically, residues 75–78 (GIYV) are perinuclear space.

The protein belongs to the OST5 family. In terms of assembly, homodimer. Component of the oligosaccharyltransferase (OST) complex. Interacts with klar and Msp300, components of LINC complex.

It localises to the nucleus outer membrane. Its subcellular location is the cytoplasm. It is found in the endoplasmic reticulum membrane. In terms of biological role, subunit of the oligosaccharyl transferase (OST) complex that catalyzes the initial transfer of a defined glycan (Glc(3)Man(9)GlcNAc(2) in eukaryotes) from the lipid carrier dolichol-pyrophosphate to an asparagine residue within an Asn-X-Ser/Thr consensus motif in nascent polypeptide chains, the first step in protein N-glycosylation. N-glycosylation occurs cotranslationally and the complex associates with the Sec61 complex at the channel-forming translocon complex that mediates protein translocation across the endoplasmic reticulum (ER). All subunits are required for a maximal enzyme activity. In addition may regulates nuclear envelope (NE) architecture and nuclear positioning through the linker of nucleoskeleton and cytoskeleton (LINC)-dependent and -independent mechanisms. The sequence is that of Transmembrane protein 258 from Drosophila melanogaster (Fruit fly).